We begin with the raw amino-acid sequence, 169 residues long: MSRIALYPGSFDPVTNGHLDVVRHAVALCDKLVVAIGIHPGKKPLFTTEERLAMVERVFGPVAKAAGCDFGCTTYDNLTVTAAEKVGATLMIRGLRDGSDLDYEMQIAGMNETMAPAIHTVFLPASVGVRPITATLVRQIAAMGGDVSAFVPAEVASALKSKFAAGSPA.

Ser-10 serves as a coordination point for substrate. ATP-binding positions include 10-11 (SF) and His-18. Substrate contacts are provided by Lys-42, Thr-79, and Arg-93. Residues 94–96 (GLR), Glu-104, and 129–135 (VRPITAT) contribute to the ATP site.

This sequence belongs to the bacterial CoaD family. Homohexamer. The cofactor is Mg(2+).

Its subcellular location is the cytoplasm. The catalysed reaction is (R)-4'-phosphopantetheine + ATP + H(+) = 3'-dephospho-CoA + diphosphate. Its pathway is cofactor biosynthesis; coenzyme A biosynthesis; CoA from (R)-pantothenate: step 4/5. In terms of biological role, reversibly transfers an adenylyl group from ATP to 4'-phosphopantetheine, yielding dephospho-CoA (dPCoA) and pyrophosphate. This chain is Phosphopantetheine adenylyltransferase, found in Rhodopseudomonas palustris (strain ATCC BAA-98 / CGA009).